A 346-amino-acid polypeptide reads, in one-letter code: Probable long-chain-alcohol O-fatty-acyltransferase 6 (346 aa).

8 helical membrane passes run 7–27, 36–56, 59–79, 116–136, 146–166, 228–248, 255–275, and 289–309; these read LFIQ…YLTP, LLSV…FSTV, SFTI…LFAL, FPKW…LQAY, FLLG…LTLI, FFAI…LYFY, TWEV…EVAL, and PAVS…WLFS.

The protein belongs to the wax synthase family.

It is found in the membrane. The enzyme catalyses a long chain fatty alcohol + a fatty acyl-CoA = a wax ester + CoA. In terms of biological role, catalyzes the final step in the synthesis of long-chain linear esters (waxes). This is Probable long-chain-alcohol O-fatty-acyltransferase 6 (AT6) from Arabidopsis thaliana (Mouse-ear cress).